We begin with the raw amino-acid sequence, 107 residues long: UPF0102 protein CTN_0433 (107 aa).

It belongs to the UPF0102 family.

The sequence is that of UPF0102 protein CTN_0433 from Thermotoga neapolitana (strain ATCC 49049 / DSM 4359 / NBRC 107923 / NS-E).